Reading from the N-terminus, the 135-residue chain is Large ribosomal subunit protein mL41A (135 aa).

The transit peptide at 1–13 (MGLISKIARGLVR) directs the protein to the mitochondrion.

Belongs to the mitochondrion-specific ribosomal protein mL41 family. As to quaternary structure, component of the mitochondrial ribosome large subunit (39S) which comprises a 16S rRNA and about 50 distinct proteins.

The protein resides in the mitochondrion. Its function is as follows. Component of the mitochondrial ribosome large subunit. Also involved in apoptosis and cell cycle. The polypeptide is Large ribosomal subunit protein mL41A (mrpl41-a) (Xenopus laevis (African clawed frog)).